Here is a 142-residue protein sequence, read N- to C-terminus: Coactosin-like protein (142 aa).

An N-acetylalanine modification is found at Ala-2. Residues 2–130 (ATKIDKEACR…EEDFIRSELK (129 aa)) enclose the ADF-H domain. Residues 66–75 (TGDAMSKRSK) form a flexible and important for F-actin binding region. An N6-acetyllysine modification is found at Lys-102. A Phosphoserine modification is found at Ser-141.

It belongs to the actin-binding proteins ADF family. Coactosin subfamily. Interacts with 5-lipoxygenase (ALOX5/5LO) in a calcium-independent manner. Binds to F-actin with a stoichiometry of 1:2.

It localises to the cytoplasm. The protein resides in the cytoskeleton. It is found in the nucleus. Its function is as follows. Binds to F-actin in a calcium-independent manner. Has no direct effect on actin depolymerization. Acts as a chaperone for ALOX5 (5LO), influencing both its stability and activity in leukotrienes synthesis. The chain is Coactosin-like protein (Cotl1) from Mus musculus (Mouse).